Reading from the N-terminus, the 126-residue chain is Thioredoxin-like 3-3 (126 aa).

Residues 1-24 form a disordered region; the sequence is MRKQESEGANLEFESKSNDNGNVK. The 122-residue stretch at 5 to 126 folds into the Thioredoxin domain; sequence ESEGANLEFE…RLHDRLWLHS (122 aa). Catalysis depends on nucleophile residues Cys-55 and Cys-58. Residues Cys-55 and Cys-58 are joined by a disulfide bond.

The protein belongs to the thioredoxin family.

Its function is as follows. Probable thiol-disulfide oxidoreductase that may participate in various redox reactions. The sequence is that of Thioredoxin-like 3-3 from Arabidopsis thaliana (Mouse-ear cress).